The chain runs to 96 residues: C-C motif chemokine 20 (96 aa).

The signal sequence occupies residues 1–26; that stretch reads MMCSSKNLLLAALMSVLLLHFCSKSE. Disulfide bonds link Cys-32–Cys-58 and Cys-33–Cys-74.

Belongs to the intercrine beta (chemokine CC) family.

The protein localises to the secreted. In terms of biological role, acts as a ligand for C-C chemokine receptor CCR6. Signals through binding and activation of CCR6 and induces a strong chemotactic response and mobilization of intracellular calcium ions. The ligand-receptor pair CCL20-CCR6 is responsible for the chemotaxis of dendritic cells (DC), effector/memory T-cells and B-cells and plays an important role at skin and mucosal surfaces under homeostatic and inflammatory conditions, as well as in pathology, including cancer and autoimmune diseases. CCL20 acts as a chemotactic factor that attracts lymphocytes and, slightly, neutrophils, but not monocytes. Involved in the recruitment of both the pro-inflammatory IL17 producing helper T-cells (Th17) and the regulatory T-cells (Treg) to sites of inflammation. Required for optimal migration of thymic natural regulatory T cells (nTregs) and DN1 early thymocyte progenitor cells. Positively regulates sperm motility and chemotaxis via its binding to CCR6 which triggers Ca2+ mobilization in the sperm which is important for its motility. May be involved in formation and function of the mucosal lymphoid tissues by attracting lymphocytes and dendritic cells towards epithelial cells. This is C-C motif chemokine 20 (CCL20) from Bos taurus (Bovine).